A 328-amino-acid polypeptide reads, in one-letter code: RNA-binding motif protein, X-linked 2 (328 aa).

Residue Lys-8 forms a Glycyl lysine isopeptide (Lys-Gly) (interchain with G-Cter in SUMO2) linkage. Positions Ala-36–Asn-114 constitute an RRM domain. Residues Pro-118 to Tyr-328 are disordered. Position 140 is a phosphothreonine (Thr-140). Ser-149 carries the phosphoserine modification. A compositionally biased stretch (basic residues) spans Thr-157–Glu-172. Basic and acidic residues-rich tracts occupy residues Thr-192–Glu-219, Gly-236–Lys-247, and Lys-255–Arg-273. A Glycyl lysine isopeptide (Lys-Gly) (interchain with G-Cter in SUMO2) cross-link involves residue Lys-246. Phosphoserine is present on Ser-274. Positions His-291–Ser-314 are enriched in basic residues. The segment covering His-315 to Tyr-328 has biased composition (basic and acidic residues).

The protein belongs to the IST3 family. Part of the activated spliceosome B/catalytic step 1 spliceosome, one of the forms of the spliceosome which has a well-formed active site but still cannot catalyze the branching reaction and is composed of at least 52 proteins, the U2, U5 and U6 snRNAs and the pre-mRNA. Component of the minor spliceosome, which splices U12-type introns.

It localises to the nucleus. Involved in pre-mRNA splicing as component of the activated spliceosome. As a component of the minor spliceosome, involved in the splicing of U12-type introns in pre-mRNAs. In Rattus norvegicus (Rat), this protein is RNA-binding motif protein, X-linked 2 (Rbmx2).